A 301-amino-acid polypeptide reads, in one-letter code: Ankyrin repeat domain-containing protein 29 (301 aa).

ANK repeat units follow at residues 11–41 (PLAN…DVDC), 45–74 (HGTT…DINL), 78–107 (SGTT…STEF), 111–140 (DGGT…NIHD), 144–173 (DGAT…KVNQ), 177–206 (DGTA…DRDA), 210–239 (DGTT…TLGI), and 242–271 (NGTS…DPSL).

In Homo sapiens (Human), this protein is Ankyrin repeat domain-containing protein 29 (ANKRD29).